A 309-amino-acid polypeptide reads, in one-letter code: Protease HtpX homolog (309 aa).

Transmembrane regions (helical) follow at residues 15-35 (NAVL…VDVI) and 54-74 (IFPT…VVCI). H165 provides a ligand contact to Zn(2+). Residue E166 is part of the active site. Position 169 (H169) interacts with Zn(2+). 2 helical membrane-spanning segments follow: residues 181–201 (VGIL…FFMG) and 213–233 (MILL…QMYL). E238 lines the Zn(2+) pocket.

This sequence belongs to the peptidase M48B family. It depends on Zn(2+) as a cofactor.

It is found in the cell inner membrane. The protein is Protease HtpX homolog of Helicobacter acinonychis (strain Sheeba).